Here is a 146-residue protein sequence, read N- to C-terminus: uncharacterized protein (146 aa).

Helical transmembrane passes span Met1–Leu21, Ala35–Gly55, Gly87–His107, and Ala111–Leu131.

The protein localises to the cell membrane. This is an uncharacterized protein from Mycobacterium tuberculosis (strain CDC 1551 / Oshkosh).